A 388-amino-acid chain; its full sequence is Fetuin-B (388 aa).

An N-terminal signal peptide occupies residues 1 to 18; that stretch reads MGLLRLLVLCTLAACCMA. 2 consecutive Cystatin fetuin-B-type domains span residues 28–141 and 152–264; these read QRPL…YNCT and TTCP…VTCE. Asn40 carries N-linked (GlcNAc...) asparagine glycosylation. 5 cysteine pairs are disulfide-bonded: Cys96/Cys107, Cys120/Cys140, Cys154/Cys157, Cys217/Cys224, and Cys237/Cys263. The N-linked (GlcNAc...) asparagine glycan is linked to Asn139. 2 disordered regions span residues 270 to 343 and 367 to 388; these read AQVP…PQGD and KEQR…VLPP. Positions 279–300 are enriched in polar residues; it reads AVTQGPQKLPQKNTAPTSSPSV. Residues Thr292 and Thr295 are each glycosylated (O-linked (GalNAc...) threonine). Ser321 is modified (phosphoserine). Residues 367 to 381 show a composition bias toward basic and acidic residues; it reads KEQRSAECPGPEKEN.

The protein belongs to the fetuin family. In terms of tissue distribution, liver, lung and tongue.

The protein resides in the secreted. Functionally, protease inhibitor required for egg fertilization. Required to prevent premature zona pellucida hardening before fertilization, probably by inhibiting the protease activity of ASTL, a protease that mediates the cleavage of ZP2 and triggers zona pellucida hardening. The chain is Fetuin-B (Fetub) from Mus musculus (Mouse).